The primary structure comprises 464 residues: tRNA modification GTPase MnmE (464 aa).

Positions 27, 90, and 129 each coordinate (6S)-5-formyl-5,6,7,8-tetrahydrofolate. The 163-residue stretch at 222 to 384 (GVTLVLAGSV…LYDKIKTLIS (163 aa)) folds into the TrmE-type G domain. GTP contacts are provided by residues 232-237 (NAGKSS), 251-257 (SSYPGTT), and 276-279 (DTAG). Mg(2+) contacts are provided by Ser-236 and Thr-257. Residue Lys-464 participates in (6S)-5-formyl-5,6,7,8-tetrahydrofolate binding.

Belongs to the TRAFAC class TrmE-Era-EngA-EngB-Septin-like GTPase superfamily. TrmE GTPase family. As to quaternary structure, homodimer. Heterotetramer of two MnmE and two MnmG subunits. The cofactor is K(+).

It localises to the cytoplasm. Its function is as follows. Exhibits a very high intrinsic GTPase hydrolysis rate. Involved in the addition of a carboxymethylaminomethyl (cmnm) group at the wobble position (U34) of certain tRNAs, forming tRNA-cmnm(5)s(2)U34. This chain is tRNA modification GTPase MnmE, found in Borrelia garinii subsp. bavariensis (strain ATCC BAA-2496 / DSM 23469 / PBi) (Borreliella bavariensis).